Reading from the N-terminus, the 388-residue chain is Staphopain A (388 aa).

The N-terminal stretch at 1–25 (MKRNFPKLIALSLIFSLSITPIANA) is a signal peptide. A propeptide spanning residues 26 to 214 (ESNSNIKAKD…TSQFKSNNYT (189 aa)) is cleaved from the precursor. Catalysis depends on residues cysteine 238, histidine 334, and asparagine 355.

Belongs to the peptidase C47 family. In the cytoplasm, prematurely activated/folded ScpA forms a stable non-covalent complex with ScpB. Cleavage leads to the activation of ScpA probably by an auto-catalytic manner.

Its subcellular location is the secreted. It catalyses the reaction Broad endopeptidase action on proteins including elastin, but rather limited hydrolysis of small-molecule substrates. Assays are conveniently made with hemoglobin, casein or Z-Phe-Arg-NHMec as substrate.. Prematurely activated/folded staphopain A is inhibited by staphostatin A (ScpB), which is probably required to protect staphylococcal cytoplasmic proteins from degradation by ScpA. Cysteine protease that plays an important role in the inhibition of host innate immune response. Cleaves host elastins found in connective tissues, pulmonary surfactant protein A in the lungs, and the chemokine receptor CXCR2 on leukocytes. Proteolytic cleavage of surfactant protein A impairs bacterial phagocytosis by neutrophils while CXCR2 degradation blocks neutrophil activation and chemotaxis. Additionally, promotes vascular leakage by activating the plasma kallikerin/kinin system, resulting in hypotension. The chain is Staphopain A (sspP) from Staphylococcus aureus (strain MRSA252).